Here is an 87-residue protein sequence, read N- to C-terminus: uncharacterized protein (87 aa).

The protein to B.subtilis XkdR.

This is an uncharacterized protein from Bacillus subtilis (strain 168).